The following is a 440-amino-acid chain: 6-phospho-alpha-glucosidase (440 aa).

4–70 provides a ligand contact to NAD(+); it reads FSIVVAGGGS…PDINFVYTTD (67 aa). Residues arginine 93 and asparagine 147 each coordinate substrate. Residue cysteine 169 coordinates Mn(2+). Catalysis depends on aspartate 170, which acts as the Proton donor. Residue histidine 200 participates in Mn(2+) binding. Tyrosine 263 (proton acceptor) is an active-site residue. Residue arginine 283 coordinates substrate.

The protein belongs to the glycosyl hydrolase 4 family. Homodimer. NAD(+) is required as a cofactor. The cofactor is Mn(2+).

Its pathway is glycan degradation; palatinose degradation. In vitro, readily hydrolyzes p-nitrophenyl-alpha-D-glucopyranoside 6-phosphate (pNPalphaG6P), a chromogenic analog of the phosphorylated isomers of sucrose. In vivo, is probably involved in the degradation of the 6-phosphate derivatives of the sucrose isomers trehalulose, turanose, maltulose and palatinose, catalyzing their hydrolysis into glucose 6-phosphate (G6P) and fructose, which allows the bacterium to use these sugars as energy sources for growth. Is not able to hydrolyze the C2 or C4 chromogenic stereomers (i.e. pNPalpha-mannopyranoside-6P and pNPalpha-galactopyranoside-6P, respectively). This is 6-phospho-alpha-glucosidase (pagL) from Leptotrichia buccalis (strain ATCC 14201 / DSM 1135 / JCM 12969 / NCTC 10249 / C-1013-b).